The sequence spans 194 residues: Xanthine phosphoribosyltransferase (194 aa).

Positions 20 and 27 each coordinate xanthine. Residue 128–132 participates in 5-phospho-alpha-D-ribose 1-diphosphate binding; sequence ANGQA. Residue Lys156 coordinates xanthine.

This sequence belongs to the purine/pyrimidine phosphoribosyltransferase family. Xpt subfamily. As to quaternary structure, homodimer.

It localises to the cytoplasm. The enzyme catalyses XMP + diphosphate = xanthine + 5-phospho-alpha-D-ribose 1-diphosphate. It functions in the pathway purine metabolism; XMP biosynthesis via salvage pathway; XMP from xanthine: step 1/1. Converts the preformed base xanthine, a product of nucleic acid breakdown, to xanthosine 5'-monophosphate (XMP), so it can be reused for RNA or DNA synthesis. The protein is Xanthine phosphoribosyltransferase of Geobacillus thermodenitrificans (strain NG80-2).